A 337-amino-acid polypeptide reads, in one-letter code: Zinc finger protein Gfi-1b (337 aa).

Residues 1–20 (MPRSFLVKSKKAHTYHQHRF) are mediates repression of transcription. The segment at 1–20 (MPRSFLVKSKKAHTYHQHRF) is SNAG domain. 6 C2H2-type zinc fingers span residues 170 to 193 (YHCVKCNKVFSTPHGLEVHVRRSH), 199 to 221 (FACEVCGKTFGHAVSLEQHTNIH), 227 to 249 (FECKMCGKTFKRSSTLSTHLLIH), 255 to 277 (YPCQYCGKRFHQKSDMKKHTYIH), 283 to 305 (HKCQVCGKAFSQSSNLITHSRKH), and 311 to 334 (FSCELCAKGFQRKVDLRRHRETQH).

As to expression, expressed in erythroid cells of primitive and definitive lineage and bone marrow cells.

Its subcellular location is the nucleus. In terms of biological role, essential transcriptional regulator necessary for development and differentiation of erythroid and megakaryocytic lineages. Alters histone methylation by recruiting histone methyltransferase to target genes promoters. Plays a role in heterochromatin formation. This chain is Zinc finger protein Gfi-1b (GFI1B), found in Gallus gallus (Chicken).